The primary structure comprises 199 residues: Holliday junction resolvase RecU (199 aa).

Residues Thr-82, Asp-84, Glu-97, and Gln-116 each coordinate Mg(2+).

This sequence belongs to the RecU family. Requires Mg(2+) as cofactor.

It localises to the cytoplasm. The enzyme catalyses Endonucleolytic cleavage at a junction such as a reciprocal single-stranded crossover between two homologous DNA duplexes (Holliday junction).. Its function is as follows. Endonuclease that resolves Holliday junction intermediates in genetic recombination. Cleaves mobile four-strand junctions by introducing symmetrical nicks in paired strands. Promotes annealing of linear ssDNA with homologous dsDNA. Required for DNA repair, homologous recombination and chromosome segregation. This chain is Holliday junction resolvase RecU, found in Streptococcus agalactiae serotype Ia (strain ATCC 27591 / A909 / CDC SS700).